The primary structure comprises 27 residues: rRNA/tRNA 2'-O-methyltransferase fibrillarin (27 aa).

The segment covering 1–12 (XFEGRGGFGGRG) has biased composition (gly residues). Residues 1-27 (XFEGRGGFGGRGGGDRGGRGXGGFGGG) are disordered. Asymmetric dimethylarginine occurs at positions 5, 11, 16, and 19.

This sequence belongs to the methyltransferase superfamily. Fibrillarin family. In terms of assembly, component of box C/D small nucleolar ribonucleoprotein (snoRNP) particles. It is associated with the U3, U8 and U13 small nuclear RNAs.

The protein localises to the nucleus. The protein resides in the nucleolus. The catalysed reaction is L-glutaminyl-[histone H2A] + S-adenosyl-L-methionine = N(5)-methyl-L-glutaminyl-[histone H2A] + S-adenosyl-L-homocysteine + H(+). S-adenosyl-L-methionine-dependent methyltransferase that has the ability to methylate both RNAs and proteins. Involved in pre-rRNA processing. Utilizes the methyl donor S-adenosyl-L-methionine to catalyze the site-specific 2'-hydroxyl methylation of ribose moieties in pre-ribosomal RNA. Site specificity is provided by a guide RNA that base pairs with the substrate. Methylation occurs at a characteristic distance from the sequence involved in base pairing with the guide RNA. Also acts as a protein methyltransferase by mediating methylation of 'Gln-105' of histone H2A (H2AQ105me), a modification that impairs binding of the FACT complex and is specifically present at 35S ribosomal DNA locus. The chain is rRNA/tRNA 2'-O-methyltransferase fibrillarin from Physarum polycephalum (Slime mold).